Consider the following 338-residue polypeptide: 1-aminocyclopropane-1-carboxylate deaminase (338 aa).

Lysine 51 carries the post-translational modification N6-(pyridoxal phosphate)lysine. Serine 78 (nucleophile) is an active-site residue.

The protein belongs to the ACC deaminase/D-cysteine desulfhydrase family. Homotrimer. It depends on pyridoxal 5'-phosphate as a cofactor.

The catalysed reaction is 1-aminocyclopropane-1-carboxylate + H2O = 2-oxobutanoate + NH4(+). Its function is as follows. Catalyzes a cyclopropane ring-opening reaction, the irreversible conversion of 1-aminocyclopropane-1-carboxylate (ACC) to ammonia and alpha-ketobutyrate. Allows growth on ACC as a nitrogen source. This Burkholderia lata (strain ATCC 17760 / DSM 23089 / LMG 22485 / NCIMB 9086 / R18194 / 383) protein is 1-aminocyclopropane-1-carboxylate deaminase.